The following is a 216-amino-acid chain: Pyrophosphatase PpaX (216 aa).

The active-site Nucleophile is Asp-9.

Belongs to the HAD-like hydrolase superfamily. PpaX family. Mg(2+) is required as a cofactor.

The catalysed reaction is diphosphate + H2O = 2 phosphate + H(+). Functionally, hydrolyzes pyrophosphate formed during P-Ser-HPr dephosphorylation by HPrK/P. Might play a role in controlling the intracellular pyrophosphate pool. This is Pyrophosphatase PpaX from Bacillus anthracis (strain A0248).